The sequence spans 347 residues: UDP-3-O-acylglucosamine N-acyltransferase (347 aa).

H241 functions as the Proton acceptor in the catalytic mechanism.

It belongs to the transferase hexapeptide repeat family. LpxD subfamily. Homotrimer.

It catalyses the reaction a UDP-3-O-[(3R)-3-hydroxyacyl]-alpha-D-glucosamine + a (3R)-hydroxyacyl-[ACP] = a UDP-2-N,3-O-bis[(3R)-3-hydroxyacyl]-alpha-D-glucosamine + holo-[ACP] + H(+). It functions in the pathway bacterial outer membrane biogenesis; LPS lipid A biosynthesis. Its function is as follows. Catalyzes the N-acylation of UDP-3-O-acylglucosamine using 3-hydroxyacyl-ACP as the acyl donor. Is involved in the biosynthesis of lipid A, a phosphorylated glycolipid that anchors the lipopolysaccharide to the outer membrane of the cell. The chain is UDP-3-O-acylglucosamine N-acyltransferase from Neisseria gonorrhoeae (strain NCCP11945).